The following is a 332-amino-acid chain: Thiosulfate-binding protein (332 aa).

The signal sequence occupies residues 1–22 (MKRLFSASLLAAGLALGGAAHA).

Belongs to the prokaryotic sulfate-binding protein family.

The protein localises to the periplasm. Binds thiosulfate specifically and with high affinity. Has no detectable affinity for sulfate. In Pseudomonas aeruginosa (strain ATCC 15692 / DSM 22644 / CIP 104116 / JCM 14847 / LMG 12228 / 1C / PRS 101 / PAO1), this protein is Thiosulfate-binding protein.